Here is a 503-residue protein sequence, read N- to C-terminus: Glutamate--tRNA ligase (503 aa).

A 'HIGH' region motif is present at residues Pro15–Gly25. Residues Lys262–Arg266 carry the 'KMSKS' region motif. Residue Lys265 participates in ATP binding.

This sequence belongs to the class-I aminoacyl-tRNA synthetase family. Glutamate--tRNA ligase type 1 subfamily. As to quaternary structure, monomer.

Its subcellular location is the cytoplasm. The catalysed reaction is tRNA(Glu) + L-glutamate + ATP = L-glutamyl-tRNA(Glu) + AMP + diphosphate. Functionally, catalyzes the attachment of glutamate to tRNA(Glu) in a two-step reaction: glutamate is first activated by ATP to form Glu-AMP and then transferred to the acceptor end of tRNA(Glu). This Prosthecochloris aestuarii (strain DSM 271 / SK 413) protein is Glutamate--tRNA ligase.